Consider the following 240-residue polypeptide: UDP-2,3-diacylglucosamine hydrolase (240 aa).

5 residues coordinate Mn(2+): Asp-8, His-10, Asp-41, Asn-79, and His-114. 79–80 is a binding site for substrate; that stretch reads NR. Residues Asp-122, Ser-160, Asn-164, Lys-167, and His-195 each coordinate substrate. Residues His-195 and His-197 each coordinate Mn(2+).

This sequence belongs to the LpxH family. Mn(2+) is required as a cofactor.

The protein localises to the cell inner membrane. It carries out the reaction UDP-2-N,3-O-bis[(3R)-3-hydroxytetradecanoyl]-alpha-D-glucosamine + H2O = 2-N,3-O-bis[(3R)-3-hydroxytetradecanoyl]-alpha-D-glucosaminyl 1-phosphate + UMP + 2 H(+). It functions in the pathway glycolipid biosynthesis; lipid IV(A) biosynthesis; lipid IV(A) from (3R)-3-hydroxytetradecanoyl-[acyl-carrier-protein] and UDP-N-acetyl-alpha-D-glucosamine: step 4/6. In terms of biological role, hydrolyzes the pyrophosphate bond of UDP-2,3-diacylglucosamine to yield 2,3-diacylglucosamine 1-phosphate (lipid X) and UMP by catalyzing the attack of water at the alpha-P atom. Involved in the biosynthesis of lipid A, a phosphorylated glycolipid that anchors the lipopolysaccharide to the outer membrane of the cell. The chain is UDP-2,3-diacylglucosamine hydrolase from Escherichia coli O7:K1 (strain IAI39 / ExPEC).